A 955-amino-acid chain; its full sequence is Translation initiation factor IF-2 (955 aa).

The disordered stretch occupies residues 49–352 (AFSQSSESTE…QAPSFGGVKI (304 aa)). The span at 77-88 (PQQQTKASAPSA) shows a compositional bias: low complexity. Composition is skewed to pro residues over residues 95–121 (PAVPKPGPGLKPGPRPVPKPGPRPGPR), 149–159 (RPVPKPGPRPG), 188–202 (RPGPRPHPGMMPPRP), and 209–223 (PPRPQAPRPQAPRPG). Residues 225 to 235 (GTAGGRPGSSA) are compositionally biased toward gly residues. The segment covering 238–264 (PPRPVPRPGPRPSPMNMPASRPTPPGG) has biased composition (pro residues). Over residues 273–322 (SGGGRGRGGGGGAGPRGGGAGGGAPRTGFGGRPGGGRGRGGTAGAFGRPG) the composition is skewed to gly residues. Residues 326–335 (SRSRKSKKQR) show a composition bias toward basic residues. In terms of domain architecture, tr-type G spans 448–620 (PRAPVVTVMG…IILTADAELD (173 aa)). The tract at residues 457–464 (GHVDHGKT) is G1. 457 to 464 (GHVDHGKT) is a GTP binding site. The tract at residues 482–486 (GITQH) is G2. Residues 507–510 (DTPG) are G3. GTP is bound by residues 507-511 (DTPGH) and 561-564 (NKID). Positions 561 to 564 (NKID) are G4. Residues 597–599 (SAK) are G5.

The protein belongs to the TRAFAC class translation factor GTPase superfamily. Classic translation factor GTPase family. IF-2 subfamily.

It is found in the cytoplasm. Functionally, one of the essential components for the initiation of protein synthesis. Protects formylmethionyl-tRNA from spontaneous hydrolysis and promotes its binding to the 30S ribosomal subunits. Also involved in the hydrolysis of GTP during the formation of the 70S ribosomal complex. This Thermobifida fusca (strain YX) protein is Translation initiation factor IF-2.